Reading from the N-terminus, the 185-residue chain is Elongation factor P (185 aa).

It belongs to the elongation factor P family.

Its subcellular location is the cytoplasm. The protein operates within protein biosynthesis; polypeptide chain elongation. Functionally, involved in peptide bond synthesis. Stimulates efficient translation and peptide-bond synthesis on native or reconstituted 70S ribosomes in vitro. Probably functions indirectly by altering the affinity of the ribosome for aminoacyl-tRNA, thus increasing their reactivity as acceptors for peptidyl transferase. This is Elongation factor P from Clostridioides difficile (strain 630) (Peptoclostridium difficile).